A 171-amino-acid polypeptide reads, in one-letter code: Tubulin polymerization-promoting protein family member 2 (171 aa).

The tract at residues 120–171 is disordered; it reads LTDTSKYTGTHKERFDESGKGKGIAGREDVTDNSGYVSGYKGAGTYDKKGSN. The segment covering 129-149 has biased composition (basic and acidic residues); the sequence is THKERFDESGKGKGIAGREDV.

The protein belongs to the TPPP family.

It is found in the cytoplasm. The protein localises to the cytosol. It localises to the cell projection. The protein resides in the cilium. Its subcellular location is the flagellum. Probable regulator of microtubule dynamics required for sperm motility. In contrast to other members of the family, has no microtubule bundling activity. This is Tubulin polymerization-promoting protein family member 2 from Bos taurus (Bovine).